A 510-amino-acid chain; its full sequence is MKLKPIEVAEILQKEIANINCLSELEEVGQVITVGDGIAQIYGLANVKSGEVVEFKSGVKGLVLNLENDSVGVVIMGDDNQVQQGDNVKRTKEVLEVPVGKALLGRVVDALGNPIDGKGDIASKEYRHIEMKAPGIIERTSVSEPVQTGIKAIDSLIPIGRGQRELIIGDRQTGKTAIAVDTIINQKQAHSLTNESDKIYCIYVAIGQKRSSVAQIVKKLEDAGAMDYTLIVSATASEAAALQFIAPYSACSMGEYFRDNGMHALIIYDDLSKHAVAYRQISLLLRRPPGREAYPGDVFYLHSRLLERAAKMSEEKGSGSLTALPIIETQAGDVSAYIPTNVISITDGQIFLESELFYKGVRPAVNVGISVSRVGSAAQIKAMKQVAGSVKLELAQFRELESFSQFGSDLDPATKAQIDHGKRLVEILKQAQYNPFPVEEQIVSIYVGTKKYLNDVPLQKVKEFEDKMLTEIRLNKKDILESIKNEQCITEETEQKLKAFLENFVKEFVK.

169-176 (GDRQTGKT) is a binding site for ATP.

Belongs to the ATPase alpha/beta chains family. F-type ATPases have 2 components, CF(1) - the catalytic core - and CF(0) - the membrane proton channel. CF(1) has five subunits: alpha(3), beta(3), gamma(1), delta(1), epsilon(1). CF(0) has three main subunits: a(1), b(2) and c(9-12). The alpha and beta chains form an alternating ring which encloses part of the gamma chain. CF(1) is attached to CF(0) by a central stalk formed by the gamma and epsilon chains, while a peripheral stalk is formed by the delta and b chains.

It localises to the cell inner membrane. The catalysed reaction is ATP + H2O + 4 H(+)(in) = ADP + phosphate + 5 H(+)(out). Functionally, produces ATP from ADP in the presence of a proton gradient across the membrane. The alpha chain is a regulatory subunit. The protein is ATP synthase subunit alpha of Rickettsia rickettsii (strain Iowa).